Reading from the N-terminus, the 119-residue chain is Ribonuclease P protein component (119 aa).

The disordered stretch occupies residues 1–20 (MLPAQHRMTRSTEFGATVSK).

The protein belongs to the RnpA family. Consists of a catalytic RNA component (M1 or rnpB) and a protein subunit.

The catalysed reaction is Endonucleolytic cleavage of RNA, removing 5'-extranucleotides from tRNA precursor.. In terms of biological role, RNaseP catalyzes the removal of the 5'-leader sequence from pre-tRNA to produce the mature 5'-terminus. It can also cleave other RNA substrates such as 4.5S RNA. The protein component plays an auxiliary but essential role in vivo by binding to the 5'-leader sequence and broadening the substrate specificity of the ribozyme. In Mycolicibacterium vanbaalenii (strain DSM 7251 / JCM 13017 / BCRC 16820 / KCTC 9966 / NRRL B-24157 / PYR-1) (Mycobacterium vanbaalenii), this protein is Ribonuclease P protein component.